We begin with the raw amino-acid sequence, 315 residues long: MKPIKIALIGAGNVGNSFLYAAMNQGLASEYGIIDINPDFADGNAFDFEDASASLPFPISVSRYEYKDLKDADFIVITAGRPQKPGETRLELVADNIRIIREIALKVKESGFSGISIIVANPVDIITRAYRDASGFSDQKVIGSGTVLDTARLQFAIAKRAKVSPNSVQAYVMGEHGDSSFVAYSNIKIAGECFCAYSKLTGIDSSNYEKELEYPVSRRAYEIINRKRATFYGIGAAIAKIVSNIIKDTKNIMIAGANLRGEYGFHGVNIGVPVVLGANGIEKIIEISLNDKEKEKFAKSVAIIDKIYQDAIKNI.

NAD(+) contacts are provided by Val14, Asp35, and Tyr66. Substrate is bound by residues Gln83, Arg89, and 121-124 (NPVD). Residues 119–121 (VAN) and Ser144 each bind NAD(+). Position 149–152 (149–152 (DTAR)) interacts with substrate. His176 serves as the catalytic Proton acceptor. Tyr221 is subject to Phosphotyrosine. Thr230 lines the substrate pocket.

The protein belongs to the LDH/MDH superfamily. LDH family. Homotetramer.

It localises to the cytoplasm. The enzyme catalyses (S)-lactate + NAD(+) = pyruvate + NADH + H(+). It functions in the pathway fermentation; pyruvate fermentation to lactate; (S)-lactate from pyruvate: step 1/1. Catalyzes the conversion of lactate to pyruvate. The protein is L-lactate dehydrogenase of Mesomycoplasma hyopneumoniae (strain 7448) (Mycoplasma hyopneumoniae).